Here is a 166-residue protein sequence, read N- to C-terminus: Putative glycine-rich cell wall structural protein 1 (166 aa).

A signal peptide spans 1 to 23; the sequence is MARKVIALAFLLLLTISLSKSNA. R2; Tyr-rich repeat units follow at residues 56 to 62 and 93 to 99; these read GYGYNYG and GYGYGYG. Residues 105–125 form a disordered region; sequence AQGQGSGGGGGGGGGGGGGGS. The stretch at 132-138 is one R2; Tyr-rich repeat; that stretch reads GYGYGYG. Over residues 144–160 the composition is skewed to gly residues; that stretch reads GGGGGGDGGGGGGGGSA. The disordered stretch occupies residues 144–166; it reads GGGGGGDGGGGGGGGSAYVGRHE.

It localises to the secreted. The protein resides in the cell wall. Functionally, responsible for plasticity of the cell wall. The sequence is that of Putative glycine-rich cell wall structural protein 1 (GRP-1) from Oryza sativa subsp. japonica (Rice).